Consider the following 42-residue polypeptide: uncharacterized protein (42 aa).

The protein localises to the plastid. It localises to the chloroplast. This is an uncharacterized protein from Diacronema lutheri (Unicellular marine alga).